The chain runs to 354 residues: uncharacterized protein (354 aa).

2 disordered regions span residues 1–74 and 87–115; these read MGTK…ENCR and SESG…QRAS. At Lys-19 the chain carries N6-acetyllysine. A compositionally biased stretch (low complexity) spans 32–41; that stretch reads EGPSSNSSFH. Acidic residues predominate over residues 45 to 54; it reads EEGTDLEGDM. Residues Ser-115 and Ser-174 each carry the phosphoserine modification. A compositionally biased stretch (polar residues) spans 182 to 199; it reads QGSSQDLPMQANLSQSNE. Disordered stretches follow at residues 182-208 and 235-298; these read QGSS…GRDR and QVAD…DELS. The residue at position 291 (Tyr-291) is a Phosphotyrosine. A Phosphoserine modification is found at Ser-292.

This is an uncharacterized protein from Mus musculus (Mouse).